Consider the following 517-residue polypeptide: Ovoinhibitor (517 aa).

Kazal-like domains are found at residues 67 to 132 (FGIE…ECRP), 133 to 197 (KHVT…ECKL), 198 to 263 (EIGS…KCRQ), 264 to 329 (EIPE…RCKE), 330 to 394 (RSTP…RCRE), 395 to 460 (EVPE…RCEE), and 461 to 517 (DITK…MAAC). N-linked (GlcNAc...) asparagine glycosylation is present at Asn72. 21 disulfide bridges follow: Cys73–Cys112, Cys90–Cys109, Cys98–Cys130, Cys139–Cys177, Cys155–Cys174, Cys163–Cys195, Cys204–Cys243, Cys221–Cys240, Cys229–Cys261, Cys270–Cys309, Cys287–Cys306, Cys295–Cys327, Cys336–Cys374, Cys352–Cys371, Cys360–Cys392, Cys401–Cys440, Cys418–Cys437, Cys426–Cys458, Cys467–Cys499, Cys477–Cys496, and Cys485–Cys517. Asn186 carries an N-linked (GlcNAc...) asparagine glycan. Asn506 is a glycosylation site (N-linked (GlcNAc...) asparagine).

In terms of processing, glycosylated. In terms of tissue distribution, expressed in oviduct (at protein level). Expressed in egg white (at protein level). Expressed in egg yolk plasma of non-fertilized eggs (at protein level). Expressed in the magnum of the oviduct (at protein level). Expressed in oviduct. Expressed in liver. Expressed in the cortico-medullary border region of the bursa of Fabricius by the bursal secretory dendritic-like cells. Highly expressed in the magnum of the oviduct, and at a lower level in uterus. Weakly expressed in white isthmus and very weakly in infundibulum. Not expressed in duodenum and kidney.

Its subcellular location is the secreted. Its function is as follows. Serine protease inhibitor involved in antimicrobial egg defense preventing contamination of table eggs (non-fertilized eggs) and protecting the chick embryo (fertilized eggs). Inhibits trypsin, chymotrypsin, elastase, subtilisin and a proteinase of fungus Aspergillus oryzae. Inhibits calcium-activated potassium channels KCNMA1 (bovine) and slo (Drosophila). Has antibacterial activity against B.thuringiensis LMSA 3.06.004, but not against S.aureus CIP 103 811, P.aeruginosa PAO1, B.cereus ATCC6464 or B.subtilis ATCC 6633. The chain is Ovoinhibitor from Gallus gallus (Chicken).